A 126-amino-acid chain; its full sequence is Holo-[acyl-carrier-protein] synthase (126 aa).

Mg(2+)-binding residues include Asp9 and Glu58.

Belongs to the P-Pant transferase superfamily. AcpS family. Mg(2+) serves as cofactor.

It localises to the cytoplasm. The enzyme catalyses apo-[ACP] + CoA = holo-[ACP] + adenosine 3',5'-bisphosphate + H(+). Functionally, transfers the 4'-phosphopantetheine moiety from coenzyme A to a Ser of acyl-carrier-protein. The protein is Holo-[acyl-carrier-protein] synthase of Escherichia coli O139:H28 (strain E24377A / ETEC).